Reading from the N-terminus, the 650-residue chain is Probable protein phosphatase 2C 36 (650 aa).

Residues 146–166 (SGKKTKEKAKLKKSGSKSFTK) are disordered. Residues 148 to 166 (KKTKEKAKLKKSGSKSFTK) are compositionally biased toward basic residues. Residues 239 to 641 (ESALEEPKIQ…DDVSVIVISL (403 aa)) form the PPM-type phosphatase domain. Asp276, Gly277, Asp569, and Asp632 together coordinate Mn(2+).

It belongs to the PP2C family. Mg(2+) serves as cofactor. It depends on Mn(2+) as a cofactor.

It localises to the nucleus. It catalyses the reaction O-phospho-L-seryl-[protein] + H2O = L-seryl-[protein] + phosphate. The enzyme catalyses O-phospho-L-threonyl-[protein] + H2O = L-threonyl-[protein] + phosphate. This is Probable protein phosphatase 2C 36 (PLL3) from Arabidopsis thaliana (Mouse-ear cress).